The sequence spans 539 residues: Eukaryotic translation initiation factor 3 subunit L (539 aa).

Residues 302 to 514 (TFSSILLYIQ…IHIADTKVSH (213 aa)) form the PCI domain.

It belongs to the eIF-3 subunit L family. Component of the eukaryotic translation initiation factor 3 (eIF-3) complex.

The protein localises to the cytoplasm. Component of the eukaryotic translation initiation factor 3 (eIF-3) complex, which is involved in protein synthesis of a specialized repertoire of mRNAs and, together with other initiation factors, stimulates binding of mRNA and methionyl-tRNAi to the 40S ribosome. The eIF-3 complex specifically targets and initiates translation of a subset of mRNAs involved in cell proliferation. The protein is Eukaryotic translation initiation factor 3 subunit L of Anopheles gambiae (African malaria mosquito).